A 201-amino-acid polypeptide reads, in one-letter code: Small ribosomal subunit protein uS4 (201 aa).

The 61-residue stretch at 93 to 153 (ARLDNVVYRM…EKSKSLEAID (61 aa)) folds into the S4 RNA-binding domain.

Belongs to the universal ribosomal protein uS4 family. As to quaternary structure, part of the 30S ribosomal subunit. Contacts protein S5. The interaction surface between S4 and S5 is involved in control of translational fidelity.

Functionally, one of the primary rRNA binding proteins, it binds directly to 16S rRNA where it nucleates assembly of the body of the 30S subunit. Its function is as follows. With S5 and S12 plays an important role in translational accuracy. This chain is Small ribosomal subunit protein uS4, found in Flavobacterium psychrophilum (strain ATCC 49511 / DSM 21280 / CIP 103535 / JIP02/86).